The sequence spans 108 residues: Large ribosomal subunit protein uL23 (108 aa).

It belongs to the universal ribosomal protein uL23 family. In terms of assembly, part of the 50S ribosomal subunit. Contacts protein L29, and trigger factor when it is bound to the ribosome.

In terms of biological role, one of the early assembly proteins it binds 23S rRNA. One of the proteins that surrounds the polypeptide exit tunnel on the outside of the ribosome. Forms the main docking site for trigger factor binding to the ribosome. This chain is Large ribosomal subunit protein uL23, found in Albidiferax ferrireducens (strain ATCC BAA-621 / DSM 15236 / T118) (Rhodoferax ferrireducens).